We begin with the raw amino-acid sequence, 534 residues long: Ankyrin repeat domain-containing protein 34C (534 aa).

ANK repeat units lie at residues 10-39 (TDGNSLLKAVWLGRLRLTRLLLEGGAYINE), 43-80 (KGETALMVACITKHVDQQSISKSKMVKYLLDNRADPNI), 84-114 (SGKTALIHACIRRAGGEVVSLLLENGADPSL), and 118-147 (TGASALVYAINADDKDALKHLLDACKAKGK). The tract at residues 159 to 205 (SGTKTTKQYLNVPPSPKVEDRQSPPLCTTPSDVELKTSGLASPPSEK) is disordered. Position 301 is a phosphoserine (Ser301). Disordered regions lie at residues 332-368 (YEKGQAPHPRLARRGTLPLDQEKSGMCPPGPSTLKDP) and 384-403 (QPVGDPPNSMSLESGKGPLD). Ser446 carries the phosphoserine modification. The disordered stretch occupies residues 480–503 (SKPASPLASGLKSMAPVAPNSPKR).

The protein belongs to the ANKRD34 family.

The protein is Ankyrin repeat domain-containing protein 34C (Ankrd34c) of Mus musculus (Mouse).